A 360-amino-acid polypeptide reads, in one-letter code: Spermidine/putrescine-binding periplasmic protein 1 (360 aa).

The N-terminal stretch at 1 to 16 (MKKFAGLITASFVAAT) is a signal peptide.

The protein belongs to the bacterial solute-binding protein PotD/PotF family.

The protein localises to the periplasm. Required for the activity of the bacterial periplasmic transport system of putrescine and spermidine. Polyamine binding protein. This is Spermidine/putrescine-binding periplasmic protein 1 (potD-B) from Haemophilus influenzae (strain ATCC 51907 / DSM 11121 / KW20 / Rd).